Here is a 414-residue protein sequence, read N- to C-terminus: Cytochrome P450 CYP105Q4 (414 aa).

Residues 1–12 are compositionally biased toward polar residues; sequence MSDTLASPSPET. The interval 1–21 is disordered; sequence MSDTLASPSPETASGIPDYPM. His-108, Gln-302, Arg-304, His-361, and Cys-363 together coordinate heme.

This sequence belongs to the cytochrome P450 family. Requires heme as cofactor.

In terms of biological role, can bind oleic-acid derivatives, amphotericin B like precursors and a variety of nitrogen ligand donors. In Mycobacterium marinum (strain ATCC BAA-535 / M), this protein is Cytochrome P450 CYP105Q4.